Consider the following 160-residue polypeptide: MRIWIDADACPKAAKELVCKFALKRKLEVWMVAGQPQVKPPFACVRLVVVESGMDAADDYLVEQAEPGDLVICSDVPLADRLIKKQVAALDPRGREFDARNMGDKLAMRNLMADLRDLGQMGGGQAPYGDRDRQAFANALDRLLTRLQREAGLRANQPHK.

This sequence belongs to the UPF0178 family.

The chain is UPF0178 protein PSPA7_5991 from Pseudomonas paraeruginosa (strain DSM 24068 / PA7) (Pseudomonas aeruginosa (strain PA7)).